A 511-amino-acid chain; its full sequence is Cobyric acid synthase (511 aa).

In terms of domain architecture, GATase cobBQ-type spans 251–443; the sequence is LLDIAIICLP…IHGIFDNDIF (193 aa). The active-site Nucleophile is the C332. The active site involves H435.

The protein belongs to the CobB/CobQ family. CobQ subfamily.

The protein operates within cofactor biosynthesis; adenosylcobalamin biosynthesis. Catalyzes amidations at positions B, D, E, and G on adenosylcobyrinic A,C-diamide. NH(2) groups are provided by glutamine, and one molecule of ATP is hydrogenolyzed for each amidation. The polypeptide is Cobyric acid synthase (Listeria welshimeri serovar 6b (strain ATCC 35897 / DSM 20650 / CCUG 15529 / CIP 8149 / NCTC 11857 / SLCC 5334 / V8)).